Consider the following 180-residue polypeptide: MLPNAMASNHVMPSGAPPVLPKADYRNAMARLGAAVNIITTDGPAGRAGFTASAVCSVTDEPPMLLVCLNRSASVYPAFTANGVLCVNVLAAGHQALSGLFGGKTPMDERFAAGRWSRKATGSPVLEDAAASFDCRVVQATSAGTHDVLFCEALAIAIGGAAQSLIYFDRRYHEIAAPPH.

It belongs to the non-flavoprotein flavin reductase family. RutF subfamily.

It catalyses the reaction FMNH2 + NAD(+) = FMN + NADH + 2 H(+). Functionally, catalyzes the reduction of FMN to FMNH2 which is used to reduce pyrimidine by RutA via the Rut pathway. This chain is FMN reductase (NADH) RutF, found in Variovorax paradoxus (strain S110).